A 202-amino-acid polypeptide reads, in one-letter code: LexA repressor (202 aa).

A DNA-binding region (H-T-H motif) is located at residues 28–48 (RAEIAQRLGFRSPNAAEEHLK). Catalysis depends on for autocatalytic cleavage activity residues Ser-119 and Lys-156.

Belongs to the peptidase S24 family. Homodimer.

The enzyme catalyses Hydrolysis of Ala-|-Gly bond in repressor LexA.. Represses a number of genes involved in the response to DNA damage (SOS response), including recA and lexA. Binds to the 16 bp palindromic sequence 5'-CTGTATATATATACAG-3'. In the presence of single-stranded DNA, RecA interacts with LexA causing an autocatalytic cleavage which disrupts the DNA-binding part of LexA, leading to derepression of the SOS regulon and eventually DNA repair. This Klebsiella pneumoniae (strain 342) protein is LexA repressor.